Consider the following 225-residue polypeptide: Small ribosomal subunit protein uS2 (225 aa).

Residues 1–13 (MAEAKPALEKEAA) show a composition bias toward basic and acidic residues. The disordered stretch occupies residues 1–33 (MAEAKPALEKEAAVKTGSIPSESEDETASHKEG).

It belongs to the universal ribosomal protein uS2 family.

The sequence is that of Small ribosomal subunit protein uS2 from Methanosarcina acetivorans (strain ATCC 35395 / DSM 2834 / JCM 12185 / C2A).